Consider the following 174-residue polypeptide: Soma ferritin (174 aa).

The 150-residue stretch at 8-157 (QNYHAESEAG…DYITNLKRVG (150 aa)) folds into the Ferritin-like diiron domain. Residues glutamate 25, glutamate 60, histidine 63, glutamate 105, and glutamine 139 each contribute to the Fe cation site.

The protein belongs to the ferritin family. Oligomer of 12 or 24 subunits. The functional molecule is roughly spherical and contains a central cavity into which the polymeric mineral iron core is deposited. In terms of tissue distribution, expressed in somatic tissues but not in oocytes.

Its subcellular location is the cytoplasm. The enzyme catalyses 4 Fe(2+) + O2 + 4 H(+) = 4 Fe(3+) + 2 H2O. In terms of biological role, stores iron in a soluble, non-toxic, readily available form. Important for iron homeostasis. Has ferroxidase activity. Iron is taken up in the ferrous form and deposited as ferric hydroxides after oxidation. The sequence is that of Soma ferritin from Lymnaea stagnalis (Great pond snail).